A 296-amino-acid chain; its full sequence is MERSHVGRDCGSRSSPRAFSVPTSNVPMKMSIPFRPKQSLGQNFLHDPNMAEKIVGTLTAPPEAHVVEVGAGTGVLTERLAERHDRLTALEIDERAVEVLRERVPEADVRETDVRETDWAALADEKGGPLRVISNTPYYLTSPILFALLGQRDCLAEAVLTMQKEVAERIVAEPSTKAYGILSVLLQLFAEPTLCFTVPPQVFSPQPDVTSAVVRIRFGPDTEPEDLHFDDARRYVRAAFNQRRKMLRNSLSAWTKEQDVGFPNDWGRKRAEALTPDEFATLARHLDAHADPVPDA.

Positions 1 to 11 (MERSHVGRDCG) are enriched in basic and acidic residues. The tract at residues 1-24 (MERSHVGRDCGSRSSPRAFSVPTS) is disordered. The segment covering 12 to 24 (SRSSPRAFSVPTS) has biased composition (polar residues). S-adenosyl-L-methionine contacts are provided by N43, L45, G70, E91, D113, and N135.

This sequence belongs to the class I-like SAM-binding methyltransferase superfamily. rRNA adenine N(6)-methyltransferase family. RsmA subfamily.

It is found in the cytoplasm. The enzyme catalyses adenosine(1518)/adenosine(1519) in 16S rRNA + 4 S-adenosyl-L-methionine = N(6)-dimethyladenosine(1518)/N(6)-dimethyladenosine(1519) in 16S rRNA + 4 S-adenosyl-L-homocysteine + 4 H(+). Specifically dimethylates two adjacent adenosines (A1518 and A1519) in the loop of a conserved hairpin near the 3'-end of 16S rRNA in the 30S particle. May play a critical role in biogenesis of 30S subunits. The sequence is that of Ribosomal RNA small subunit methyltransferase A from Salinibacter ruber (strain DSM 13855 / M31).